A 293-amino-acid chain; its full sequence is Putative DNA glycosylase At3g47830 (293 aa).

Positions 1-10 (MSKAQKRKRL) are enriched in basic residues. Positions 1-34 (MSKAQKRKRLNKYDGESKTPANKSTVDGGNPYPT) are disordered. DNA-binding residues include Asn108 and Lys151. Lys196 (schiff-base intermediate with DNA) is an active-site residue. Positions 216 and 232 each coordinate DNA.

This sequence belongs to the DNA glycosylase family.

This is Putative DNA glycosylase At3g47830 from Arabidopsis thaliana (Mouse-ear cress).